A 296-amino-acid polypeptide reads, in one-letter code: 6-hydroxypseudooxynicotine dehydrogenase complex subunit alpha (296 aa).

In terms of domain architecture, FAD-binding PCMH-type spans 1 to 177; that stretch reads MKPPSFDYVV…VEVNVPQLPH (177 aa). FAD-binding positions include 30–37, 111–115, and Glu-124; these read IIAGGQSL and TIGGS.

In terms of assembly, heterohexamer of 2 alpha (kdhA), 2 beta (kdhB) and 2 gamma (kdhC) subunit. Dimer of heterotrimers. FAD is required as a cofactor.

It catalyses the reaction 6-hydroxypseudooxynicotine + A + H2O = 2,6-dihydroxypseudooxynicotine + AH2. It functions in the pathway alkaloid degradation; nicotine degradation. In terms of biological role, molybdo-flavoprotein enzyme complex involved in nicotine degradation. The subunit gamma (large subunit) contains the substrate-binding sites, the subunit alpha (medium subunit) binds FAD and the subunit beta (small subunit) has a 2Fe-2S ferredoxin-type domain which binds 2 2Fe-2S clusters. The sequence is that of 6-hydroxypseudooxynicotine dehydrogenase complex subunit alpha (kdhA) from Paenarthrobacter nicotinovorans (Arthrobacter nicotinovorans).